A 557-amino-acid polypeptide reads, in one-letter code: DNA 3'-5' helicase XPB (557 aa).

The tract at residues 1–135 (MTDGPLIVQS…APLLGTRIAP (135 aa)) is required for protein stability or solubility. The region spanning 190-344 (VDNFWNGGSG…DVFSLIGPKR (155 aa)) is the Helicase ATP-binding domain. Position 203-210 (203-210 (LPCGAGKT)) interacts with ATP. The DEAH box signature appears at 298-301 (DEVH). The region spanning 398–544 (RVVEKLVAQH…AYRIVDADDI (147 aa)) is the Helicase C-terminal domain.

It belongs to the helicase family. RAD25/XPB subfamily. Monomer. Requires Mn(2+) as cofactor. Mg(2+) serves as cofactor. It depends on Ca(2+) as a cofactor.

It catalyses the reaction Couples ATP hydrolysis with the unwinding of duplex DNA by translocating in the 3'-5' direction.. The enzyme catalyses ATP + H2O = ADP + phosphate + H(+). Functionally, ATP-dependent 3'-5' DNA helicase, unwinds 3'-overhangs, 3'- flaps, and splayed-arm DNA substrates but not 5'-overhangs or 5'-flap substrates. Requires ATP hydrolysis for activity; the ATPase activity is DNA-dependent and requires a minimum of 4 single-stranded nucleotides (nt) with 6-10 nt providing all necessary interactions for full processive unwinding. The ATPase prefers ATP over CTP or GTP, is almost inactive with TTP. The sequence is that of DNA 3'-5' helicase XPB from Kineococcus radiotolerans (strain ATCC BAA-149 / DSM 14245 / SRS30216).